The primary structure comprises 229 residues: QLHPLYLSGCPTTANCGSLGTPTNPALSCEHLKSVCADTASDFYYIESAGLYHKVFCEMDIEGGGWARYGRSNQGTTWNYVDEDAAEITLDIINASEVKEMTDLKYNRFLVQTDVVFKMKADDSVNPSRLTTRSLPWLEESPLFIPDYGNDHTRIEFPSGSVDRVTCIPGSSSKCGQGGGLPTANGLSKPFFFQSLFFSPRGTGASAHNDQWNRNKYTWDGSYYFVYAK.

The N-linked (GlcNAc...) asparagine glycan is linked to Asn-94.

It is found in the secreted. This chain is Echinolectin 1, found in Echinometra lucunter (Rock-boring urchin).